A 341-amino-acid chain; its full sequence is L-threonine 3-dehydrogenase (341 aa).

C38 is a binding site for Zn(2+). Active-site charge relay system residues include T40 and H43. The Zn(2+) site is built by H63, E64, C93, C96, C99, and C107. Residues I175, D195, R200, 262–264 (LGI), and 286–287 (IY) each bind NAD(+).

The protein belongs to the zinc-containing alcohol dehydrogenase family. As to quaternary structure, homotetramer. Requires Zn(2+) as cofactor.

The protein resides in the cytoplasm. The enzyme catalyses L-threonine + NAD(+) = (2S)-2-amino-3-oxobutanoate + NADH + H(+). It participates in amino-acid degradation; L-threonine degradation via oxydo-reductase pathway; glycine from L-threonine: step 1/2. Its function is as follows. Catalyzes the NAD(+)-dependent oxidation of L-threonine to 2-amino-3-ketobutyrate. This is L-threonine 3-dehydrogenase from Salmonella arizonae (strain ATCC BAA-731 / CDC346-86 / RSK2980).